Here is a 205-residue protein sequence, read N- to C-terminus: High frequency lysogenization protein HflD homolog (205 aa).

Belongs to the HflD family.

It is found in the cytoplasm. The protein resides in the cell inner membrane. In Aliivibrio fischeri (strain MJ11) (Vibrio fischeri), this protein is High frequency lysogenization protein HflD homolog.